Reading from the N-terminus, the 301-residue chain is Pantothenate synthetase (301 aa).

Methionine 30 to histidine 37 is a binding site for ATP. Residue histidine 37 is the Proton donor of the active site. Glutamine 61 contributes to the (R)-pantoate binding site. Glutamine 61 lines the beta-alanine pocket. Glycine 149 to aspartate 152 is a binding site for ATP. Glutamine 155 provides a ligand contact to (R)-pantoate. Residues valine 178 and methionine 186–arginine 189 each bind ATP.

The protein belongs to the pantothenate synthetase family. In terms of assembly, homodimer.

It localises to the cytoplasm. It carries out the reaction (R)-pantoate + beta-alanine + ATP = (R)-pantothenate + AMP + diphosphate + H(+). It functions in the pathway cofactor biosynthesis; (R)-pantothenate biosynthesis; (R)-pantothenate from (R)-pantoate and beta-alanine: step 1/1. Its function is as follows. Catalyzes the condensation of pantoate with beta-alanine in an ATP-dependent reaction via a pantoyl-adenylate intermediate. This Vibrio vulnificus (strain CMCP6) protein is Pantothenate synthetase.